A 144-amino-acid polypeptide reads, in one-letter code: Toxin MT0934 (144 aa).

Its function is as follows. Toxic component of a type II toxin-antitoxin (TA) system. Its toxic effect is neutralized by coexpression with cognate antitoxin MT0933. This Mycobacterium tuberculosis (strain CDC 1551 / Oshkosh) protein is Toxin MT0934.